The following is a 240-amino-acid chain: Probable transcriptional regulatory protein A2cp1_1765 (240 aa).

This sequence belongs to the TACO1 family.

It localises to the cytoplasm. This chain is Probable transcriptional regulatory protein A2cp1_1765, found in Anaeromyxobacter dehalogenans (strain 2CP-1 / ATCC BAA-258).